The primary structure comprises 183 residues: Beta-defensin 129 (183 aa).

The signal sequence occupies residues 1-19 (MKLLFPIFASLMLQYQVNT). 3 disulfide bridges follow: Cys-27-Cys-53, Cys-34-Cys-48, and Cys-38-Cys-54. The tract at residues 141–183 (TATSTKSNTKESRDSATASPPPAPPPPNILPTPSLELEEAEEQ) is disordered. Pro residues predominate over residues 159 to 170 (SPPPAPPPPNIL).

Belongs to the beta-defensin family.

It localises to the secreted. Functionally, has antibacterial activity. The sequence is that of Beta-defensin 129 (DEFB129) from Pan troglodytes (Chimpanzee).